A 483-amino-acid chain; its full sequence is UDP-N-acetylmuramate--L-alanine ligase (483 aa).

112-118 (GTHGKTT) contacts ATP.

Belongs to the MurCDEF family.

Its subcellular location is the cytoplasm. The catalysed reaction is UDP-N-acetyl-alpha-D-muramate + L-alanine + ATP = UDP-N-acetyl-alpha-D-muramoyl-L-alanine + ADP + phosphate + H(+). Its pathway is cell wall biogenesis; peptidoglycan biosynthesis. Functionally, cell wall formation. This Ralstonia nicotianae (strain ATCC BAA-1114 / GMI1000) (Ralstonia solanacearum) protein is UDP-N-acetylmuramate--L-alanine ligase.